A 170-amino-acid polypeptide reads, in one-letter code: Ribosome maturation factor RimM (170 aa).

The PRC barrel domain occupies 98 to 170 (PDEYYWVDLE…LIVVDWDPDF (73 aa)).

It belongs to the RimM family. In terms of assembly, binds ribosomal protein uS19.

It is found in the cytoplasm. In terms of biological role, an accessory protein needed during the final step in the assembly of 30S ribosomal subunit, possibly for assembly of the head region. Essential for efficient processing of 16S rRNA. May be needed both before and after RbfA during the maturation of 16S rRNA. It has affinity for free ribosomal 30S subunits but not for 70S ribosomes. In Xanthomonas campestris pv. campestris (strain 8004), this protein is Ribosome maturation factor RimM.